Reading from the N-terminus, the 277-residue chain is Large ribosomal subunit protein uL2 (277 aa).

Disordered regions lie at residues 1-23 (MAIKKYKPTSNGRRGMTSSDFAE), 36-58 (PLHKKGGRNNQGKLTVRHQGGGH), and 219-277 (TVRG…RKNK). Residues 8–20 (PTSNGRRGMTSSD) are compositionally biased toward polar residues. Residues 258–277 (KTRKKKNKSDKFIVRRRKNK) show a composition bias toward basic residues.

Belongs to the universal ribosomal protein uL2 family. As to quaternary structure, part of the 50S ribosomal subunit. Forms a bridge to the 30S subunit in the 70S ribosome.

In terms of biological role, one of the primary rRNA binding proteins. Required for association of the 30S and 50S subunits to form the 70S ribosome, for tRNA binding and peptide bond formation. It has been suggested to have peptidyltransferase activity; this is somewhat controversial. Makes several contacts with the 16S rRNA in the 70S ribosome. This Bacillus licheniformis (strain ATCC 14580 / DSM 13 / JCM 2505 / CCUG 7422 / NBRC 12200 / NCIMB 9375 / NCTC 10341 / NRRL NRS-1264 / Gibson 46) protein is Large ribosomal subunit protein uL2.